A 686-amino-acid polypeptide reads, in one-letter code: MARSGRERRDQEEEAAVVSVERVFEGRVVPGWKEQVTLRALAVSALLGAMFSVIVMKLNLTTGIIPSLNVSAGLLGFFLLTSWTKLLDKAGVASVRPFTRQENTVVQTCVVACSGIAFSGGFGSYIFAMSDRISDQSGEARDEHNIKNPSLGWMIGFLFIVSFLGLFSVVPLRKIMIIDYKLIYPSGTATAHLINSFHTPQGAKLAKMQVKMLGKFFVMSFSWGFFQWFYTGGDGCGFMSFPTLGLEAYRNKFFFDFSATYVGVGMICPYLVNISVLLGGVMSWGIMWPLIEHKKGDWYPADLKPSSLRGIVGYRVFISISLILGDGLYNFLKVMTRTTTALVMQVRAMMSEPTLPVSGGGGQTPEETFDDKRRTELFLKDQIPNWLALSAYVVIAVVSIATVPRIFHQLRWYHVAVSYVVAPVLAFCNAYGCGLTDWSLATTYGKLAIFTVGAWADASDGGIIAGLAACGVMIGIVSTASDLTQDFKTGYMTLASPRSMFVSQVIGTAMGCVIAPSVFWLFYKAFHDIGMPGSEYPSPNALVYRNMAILGVQGLGSLPKHCLDLCIGFFVAAIAVNLARDLAAPKVARFLPLPMAMAIPFYLGPYFGIDMCIGSLIRFVWDRLDGARAKAFAPPVASGLICGDGIWTLPQSVLALAGVKPPICMKFLSRTTNIKVDAFIAKLPSS.

14 helical membrane passes run 36–56, 60–80, 109–129, 151–171, 212–232, 271–291, 316–336, 383–403, 415–435, 461–481, 501–521, 556–576, 597–617, and 639–659; these read VTLR…VIVM, LTTG…FFLL, CVVA…IFAM, LGWM…SVVP, MLGK…FYTG, LVNI…WPLI, VFIS…KVMT, IPNW…IATV, VAVS…GCGL, GGII…STAS, FVSQ…VFWL, GSLP…AIAV, MAIP…GSLI, and GLIC…LAGV.

It belongs to the YSL (TC 2.A.67.2) family.

It localises to the membrane. Its function is as follows. May be involved in the transport of nicotianamine-chelated metals. This is Probable metal-nicotianamine transporter YSL10 (YSL10) from Oryza sativa subsp. japonica (Rice).